A 306-amino-acid polypeptide reads, in one-letter code: MTNEFLHFEKISRQTWQSLHRKTTPPLTEEELESIKSFNDQISLQDVTDIYLPLAHLIQIYKRTKEDLAFSKGIFLQRESKSQPFIIGVSGSVAVGKSTTSRLLQILLSRTVTDATVELVTTDGFLYPNQTLIEQGILNRKGFPESYDMEALLNFLDRIKNGQDVDIPVYSHEVYDIVPEKKQSVKAADFVIVEGINVFQNPQNDRLYITDFFDFSIYVDAGVDDIESWYLDRFLKMLSLAQNDPDSYYYRFTQMPIGEVESFAHQVWISINLTNLQNYIEPTRNRAEVILHKSKNHEIDEIYLKK.

91–98 (GSVAVGKS) serves as a coordination point for ATP.

It belongs to the prokaryotic pantothenate kinase family.

It is found in the cytoplasm. The catalysed reaction is (R)-pantothenate + ATP = (R)-4'-phosphopantothenate + ADP + H(+). It participates in cofactor biosynthesis; coenzyme A biosynthesis; CoA from (R)-pantothenate: step 1/5. In Streptococcus pneumoniae serotype 19F (strain G54), this protein is Pantothenate kinase.